Here is a 183-residue protein sequence, read N- to C-terminus: Ribose 1,5-bisphosphate phosphokinase PhnN (183 aa).

Belongs to the ribose 1,5-bisphosphokinase family.

The catalysed reaction is alpha-D-ribose 1,5-bisphosphate + ATP = 5-phospho-alpha-D-ribose 1-diphosphate + ADP. It functions in the pathway metabolic intermediate biosynthesis; 5-phospho-alpha-D-ribose 1-diphosphate biosynthesis; 5-phospho-alpha-D-ribose 1-diphosphate from D-ribose 5-phosphate (route II): step 3/3. Catalyzes the phosphorylation of ribose 1,5-bisphosphate to 5-phospho-D-ribosyl alpha-1-diphosphate (PRPP). This Azotobacter vinelandii (strain DJ / ATCC BAA-1303) protein is Ribose 1,5-bisphosphate phosphokinase PhnN.